A 2353-amino-acid polypeptide reads, in one-letter code: Otogelin-like protein (2353 aa).

The signal sequence occupies residues 1–31 (MNIVRKLNLMIPWSIFLLHVLLFSLQEYICA). Residues 121–297 (GICKTWGQYH…VQTPDDTKCV (177 aa)) form the VWFD 1 domain. 2 disulfide bridges follow: Cys-123–Cys-257 and Cys-145–Cys-296. N-linked (GlcNAc...) asparagine glycosylation occurs at Asn-144. The TIL 1 domain maps to 390 to 443 (CDDSFVHRDCISCCPPTCTFEKQCLGSNLHCLDGCYCPDGLVMDNGTCISLENC). N-linked (GlcNAc...) asparagine glycosylation is found at Asn-434 and Asn-473. Residues 481-654 (VQCSVVGDSH…NAWRVSSTCF (174 aa)) enclose the VWFD 2 domain. Intrachain disulfides connect Cys-483-Cys-618, Cys-505-Cys-653, and Cys-527-Cys-535. A TIL 2 domain is found at 745–800 (CQKGMLYHHCSSFCLHSCISLSSPEQCSDDCAEGCNCPEGKFYEDTLNFCVPIFHC). Residues Asn-826 and Asn-876 are each glycosylated (N-linked (GlcNAc...) asparagine). One can recognise a VWFD 3 domain in the interval 946–1115 (AVCTIYGDRH…SWALGQCESP (170 aa)). Disulfide bonds link Cys-948-Cys-1078 and Cys-992-Cys-999. 3 N-linked (GlcNAc...) asparagine glycosylation sites follow: Asn-1289, Asn-1604, and Asn-2198. The VWFD 4 domain maps to 1534-1723 (CRCSMLSELS…SWEIEKSFEV (190 aa)). Residues Cys-1536 and Cys-1683 are joined by a disulfide bond. 4 cysteine pairs are disulfide-bonded: Cys-2261–Cys-2317, Cys-2282–Cys-2331, Cys-2293–Cys-2348, and Cys-2297–Cys-2350. The region spanning 2261-2353 (CKREERICQK…EPIDCTCQWN (93 aa)) is the CTCK domain.

It belongs to the otogelin family. As to expression, expressed at high levels in fetal inner ear and heart. Low levels in fetal skeletal muscle, kidney, spleen and colon. Not detected in fetal liver, lung, brain, nor in fetal stomach. In adult tissues, highest levels in brain, kidney, heart and retina. Relatively low levels in lung, spleen and duodenum. Not detected in adult skeletal muscle, liver, nor testis.

It is found in the secreted. This Homo sapiens (Human) protein is Otogelin-like protein (OTOGL).